Here is a 167-residue protein sequence, read N- to C-terminus: C-X-C motif chemokine 15 (167 aa).

A signal peptide spans 1–25 (MAAQGWSMLLLAVLNLGIFVRPCDT). Disulfide bonds link C30-C57 and C32-C73. S157 is modified (phosphoserine).

The protein belongs to the intercrine alpha (chemokine CxC) family. Expression restricted to the lung, produced by bronchoepithelial cells and is released into the airways. Expressed at low levels in fetal lung.

The protein localises to the secreted. In terms of biological role, chemotactic for neutrophils. Involved in lung-specific neutrophil trafficking during normal and inflammatory conditions. The sequence is that of C-X-C motif chemokine 15 (Cxcl15) from Mus musculus (Mouse).